Reading from the N-terminus, the 381-residue chain is UDP-N-acetylglucosamine--N-acetylmuramyl-(pentapeptide) pyrophosphoryl-undecaprenol N-acetylglucosamine transferase (381 aa).

Residues 10-12 (TGG), asparagine 124, arginine 165, serine 190, isoleucine 245, and glutamine 290 each bind UDP-N-acetyl-alpha-D-glucosamine. A disordered region spans residues 361–381 (WGSPAGQERPGHGPVRPPDLA).

It belongs to the glycosyltransferase 28 family. MurG subfamily.

The protein resides in the cell inner membrane. It catalyses the reaction di-trans,octa-cis-undecaprenyl diphospho-N-acetyl-alpha-D-muramoyl-L-alanyl-D-glutamyl-meso-2,6-diaminopimeloyl-D-alanyl-D-alanine + UDP-N-acetyl-alpha-D-glucosamine = di-trans,octa-cis-undecaprenyl diphospho-[N-acetyl-alpha-D-glucosaminyl-(1-&gt;4)]-N-acetyl-alpha-D-muramoyl-L-alanyl-D-glutamyl-meso-2,6-diaminopimeloyl-D-alanyl-D-alanine + UDP + H(+). It participates in cell wall biogenesis; peptidoglycan biosynthesis. Its function is as follows. Cell wall formation. Catalyzes the transfer of a GlcNAc subunit on undecaprenyl-pyrophosphoryl-MurNAc-pentapeptide (lipid intermediate I) to form undecaprenyl-pyrophosphoryl-MurNAc-(pentapeptide)GlcNAc (lipid intermediate II). The protein is UDP-N-acetylglucosamine--N-acetylmuramyl-(pentapeptide) pyrophosphoryl-undecaprenol N-acetylglucosamine transferase of Anaeromyxobacter sp. (strain Fw109-5).